The following is a 433-amino-acid chain: Serine--tRNA ligase (433 aa).

235-237 (TSE) serves as a coordination point for L-serine. 266–268 (RSE) contacts ATP. L-serine is bound at residue E289. 353–356 (EISS) contacts ATP. S388 contacts L-serine.

This sequence belongs to the class-II aminoacyl-tRNA synthetase family. Type-1 seryl-tRNA synthetase subfamily. Homodimer. The tRNA molecule binds across the dimer.

The protein localises to the cytoplasm. The enzyme catalyses tRNA(Ser) + L-serine + ATP = L-seryl-tRNA(Ser) + AMP + diphosphate + H(+). It carries out the reaction tRNA(Sec) + L-serine + ATP = L-seryl-tRNA(Sec) + AMP + diphosphate + H(+). It participates in aminoacyl-tRNA biosynthesis; selenocysteinyl-tRNA(Sec) biosynthesis; L-seryl-tRNA(Sec) from L-serine and tRNA(Sec): step 1/1. In terms of biological role, catalyzes the attachment of serine to tRNA(Ser). Is also able to aminoacylate tRNA(Sec) with serine, to form the misacylated tRNA L-seryl-tRNA(Sec), which will be further converted into selenocysteinyl-tRNA(Sec). The protein is Serine--tRNA ligase of Burkholderia pseudomallei (strain 668).